Here is a 511-residue protein sequence, read N- to C-terminus: uncharacterized protein (511 aa).

The segment at 59-79 is disordered; it reads VPVAANDDQPDGSRQSVRGRQ.

This sequence belongs to the transposase 25 family.

This is an uncharacterized protein from Sinorhizobium fredii (strain NBRC 101917 / NGR234).